Here is a 109-residue protein sequence, read N- to C-terminus: Iron-sulfur assembly protein IscA-like 3, mitochondrial (109 aa).

A mitochondrion-targeting transit peptide spans 1 to 18 (MRKQVLALSDTAAARIRQ). Positions 37, 100, and 102 each coordinate Fe cation.

Belongs to the HesB/IscA family. Homodimer; may form tetramers and higher multimers. Fe cation serves as cofactor.

Its subcellular location is the mitochondrion. Its function is as follows. Involved in the assembly of mitochondrial iron-sulfur proteins. Probably involved in the binding of an intermediate of Fe/S cluster assembly. This chain is Iron-sulfur assembly protein IscA-like 3, mitochondrial, found in Arabidopsis thaliana (Mouse-ear cress).